Reading from the N-terminus, the 61-residue chain is Large ribosomal subunit protein bL32 (61 aa).

Positions 1 to 20 (MAVQKSKPSRAKRGKRRSHD) are disordered. Residues 7-19 (KPSRAKRGKRRSH) show a composition bias toward basic residues.

It belongs to the bacterial ribosomal protein bL32 family.

This chain is Large ribosomal subunit protein bL32, found in Buchnera aphidicola subsp. Cinara cedri (strain Cc).